Consider the following 421-residue polypeptide: 4-hydroxy-3-methylbut-2-en-1-yl diphosphate synthase (flavodoxin) (421 aa).

The tract at residues 1–20 (MHDAVTRPTPPSDATSWPRR) is disordered. [4Fe-4S] cluster-binding residues include cysteine 311, cysteine 314, cysteine 357, and glutamate 364.

This sequence belongs to the IspG family. Requires [4Fe-4S] cluster as cofactor.

It catalyses the reaction (2E)-4-hydroxy-3-methylbut-2-enyl diphosphate + oxidized [flavodoxin] + H2O + 2 H(+) = 2-C-methyl-D-erythritol 2,4-cyclic diphosphate + reduced [flavodoxin]. The protein operates within isoprenoid biosynthesis; isopentenyl diphosphate biosynthesis via DXP pathway; isopentenyl diphosphate from 1-deoxy-D-xylulose 5-phosphate: step 5/6. In terms of biological role, converts 2C-methyl-D-erythritol 2,4-cyclodiphosphate (ME-2,4cPP) into 1-hydroxy-2-methyl-2-(E)-butenyl 4-diphosphate. This is 4-hydroxy-3-methylbut-2-en-1-yl diphosphate synthase (flavodoxin) from Stenotrophomonas maltophilia (strain R551-3).